We begin with the raw amino-acid sequence, 463 residues long: Na(+)/H(+) antiporter NhaA 3 (463 aa).

11 helical membrane passes run 28–48 (FLATEAGGAVLLLLAAVAALL), 79–99 (LHHWVNDGAMAIFFAVVGLEI), 114–134 (IAVPALGAIGGLILPAAIYFV), 144–164 (GWGIPMSTDTAFVIGILALFG), 173–193 (LFLLTLAIVDDIGAITVVGIF), 196–216 (DHLNPVGLAVAGATVLAILGL), 232–252 (LVLWGAIHVSGVHATLAGVLV), 305–325 (VLHPISAFVVVPVFGLANAGV), 344–364 (VAAALIAGNACGISVAGVAAI), 377–397 (YGHLLGAATLAGIGFTISLFI), and 413–433 (IGILAGSLVAALAGTVILRVL). Positions 444–463 (TDEPVPRLPPRPWRAPVPAK) are disordered. Pro residues predominate over residues 449 to 463 (PRLPPRPWRAPVPAK).

Belongs to the NhaA Na(+)/H(+) (TC 2.A.33) antiporter family.

It localises to the cell membrane. The catalysed reaction is Na(+)(in) + 2 H(+)(out) = Na(+)(out) + 2 H(+)(in). Its function is as follows. Na(+)/H(+) antiporter that extrudes sodium in exchange for external protons. This chain is Na(+)/H(+) antiporter NhaA 3, found in Frankia alni (strain DSM 45986 / CECT 9034 / ACN14a).